The following is a 152-amino-acid chain: tRNA-specific adenosine deaminase (152 aa).

Positions 2–111 (AERTHFMELA…AQDPKGGAVE (110 aa)) constitute a CMP/dCMP-type deaminase domain. Position 53 (H53) interacts with Zn(2+). The active-site Proton donor is the E55. Zn(2+) contacts are provided by C83 and C86.

Belongs to the cytidine and deoxycytidylate deaminase family. As to quaternary structure, homodimer. The cofactor is Zn(2+).

The enzyme catalyses adenosine(34) in tRNA + H2O + H(+) = inosine(34) in tRNA + NH4(+). In terms of biological role, catalyzes the deamination of adenosine to inosine at the wobble position 34 of tRNA(Arg2). The protein is tRNA-specific adenosine deaminase of Agrobacterium fabrum (strain C58 / ATCC 33970) (Agrobacterium tumefaciens (strain C58)).